Consider the following 688-residue polypeptide: MSRTVDLKNFRNFGIMAHIDAGKTTTSERILFHSGRIHKIGETHDGESVMDWMEQEKERGITITSAATSVSWKNCSLNLIDTPGHVDFTVEVERSLRVLDGAIAVLDAQMGVEPQTETVWRQASRYEVPRVIFVNKMDKTGANFERSVLSIQQRLGVKAVPIQFPIGAENDFNGIIDIITKKAYFFDGNKEENAIEKPIPEQYVDQVEKLYNNLVEEVASLDDQLMADYLDGKPIEIDAIKNAIRNGVIHCKFFPVLCGSAFKNKGIKLLLDAVVDFLPSPVDVPPAKAIDANNKEISIKASDDANFIGLAFKVATDPFVGRLTFIRVYAGVLKSGSYVKNVRKNKKERVSRLVKMHAQNRNEIDEIRAGDICAVIGLKDTTTGETLTDDKLDVQLEAMQFAEPVISLAVEPKTKADQEKMSIALSKLAEEDPTFKTFSDPETGQTIIAGMGELHLDILVDRMKREFKVEVNIGAPQVSFRETFKSTSEVEGKYIKQSGGRGQYGHVKIRFEPNKDKGFEFVDKIVGGRIPREYIKPVQTGLENAMNSGPLAGYPMIDIKATLFDGSFHEVDSSEMAFKIAASLALKEAGKQCNPVLLEPIMAIEVTVPEQYFGDTMGDISSRRGIIEGTEQRDNVQLIKAKVPLKEMFGYATDLRSFSQGRGNYVMQFSHYAETPKSVVNEIIANKK.

In terms of domain architecture, tr-type G spans 8 to 282 (KNFRNFGIMA…AVVDFLPSPV (275 aa)). GTP is bound by residues 17–24 (AHIDAGKT), 81–85 (DTPGH), and 135–138 (NKMD).

Belongs to the TRAFAC class translation factor GTPase superfamily. Classic translation factor GTPase family. EF-G/EF-2 subfamily.

It localises to the cytoplasm. Functionally, catalyzes the GTP-dependent ribosomal translocation step during translation elongation. During this step, the ribosome changes from the pre-translocational (PRE) to the post-translocational (POST) state as the newly formed A-site-bound peptidyl-tRNA and P-site-bound deacylated tRNA move to the P and E sites, respectively. Catalyzes the coordinated movement of the two tRNA molecules, the mRNA and conformational changes in the ribosome. This is Elongation factor G (fusA) from Mycoplasma genitalium (strain ATCC 33530 / DSM 19775 / NCTC 10195 / G37) (Mycoplasmoides genitalium).